Reading from the N-terminus, the 374-residue chain is Alcohol dehydrogenase class-3 (374 aa).

Ala2 is subject to N-acetylalanine. 7 residues coordinate Zn(2+): Cys45, His67, Cys97, Cys100, Cys103, Cys111, and Cys174. Lys233 carries the N6-succinyllysine modification. Ser247 is subject to Phosphoserine. At Lys315 the chain carries N6-succinyllysine. Residues Ser324 and Ser351 each carry the phosphoserine modification.

Belongs to the zinc-containing alcohol dehydrogenase family. Class-III subfamily. As to quaternary structure, homodimer. Zn(2+) is required as a cofactor.

The protein localises to the cytoplasm. It carries out the reaction a primary alcohol + NAD(+) = an aldehyde + NADH + H(+). It catalyses the reaction a secondary alcohol + NAD(+) = a ketone + NADH + H(+). The enzyme catalyses S-(hydroxymethyl)glutathione + NADP(+) = S-formylglutathione + NADPH + H(+). The catalysed reaction is S-(hydroxymethyl)glutathione + NAD(+) = S-formylglutathione + NADH + H(+). It carries out the reaction 20-oxo-(5Z,8Z,11Z,14Z)-eicosatetraenoate + NAD(+) + H2O = (5Z,8Z,11Z,14Z)-eicosatetraenedioate + NADH + 2 H(+). It catalyses the reaction 20-hydroxy-(5Z,8Z,11Z,14Z)-eicosatetraenoate + NAD(+) = 20-oxo-(5Z,8Z,11Z,14Z)-eicosatetraenoate + NADH + H(+). The enzyme catalyses S-nitrosoglutathione + NADH + H(+) = S-(hydroxysulfenamide)glutathione + NAD(+). In terms of biological role, catalyzes the oxidation of long-chain primary alcohols and the oxidation of S-(hydroxymethyl) glutathione. Also oxidizes long chain omega-hydroxy fatty acids, such as 20-HETE, producing both the intermediate aldehyde, 20-oxoarachidonate and the end product, a dicarboxylic acid, (5Z,8Z,11Z,14Z)-eicosatetraenedioate. Class-III ADH is remarkably ineffective in oxidizing ethanol. Required for clearance of cellular formaldehyde, a cytotoxic and carcinogenic metabolite that induces DNA damage. Also acts as a S-nitroso-glutathione reductase by catalyzing the NADH-dependent reduction of S-nitrosoglutathione, thereby regulating protein S-nitrosylation. In Homo sapiens (Human), this protein is Alcohol dehydrogenase class-3.